The chain runs to 309 residues: D-allose kinase (309 aa).

ATP contacts are provided by residues 10 to 17 (GVDMGATH) and 142 to 149 (GMGFAVWM).

The protein belongs to the ROK (NagC/XylR) family.

The enzyme catalyses D-allose + ATP = D-allose 6-phosphate + ADP + H(+). It participates in carbohydrate degradation; D-allose degradation. Its function is as follows. Catalyzes the phosphorylation of D-allose to D-allose 6-phosphate. Also has low level glucokinase activity in vitro. This chain is D-allose kinase, found in Escherichia coli (strain K12).